The following is a 181-amino-acid chain: Adenine phosphoribosyltransferase (181 aa).

The protein belongs to the purine/pyrimidine phosphoribosyltransferase family. As to quaternary structure, homodimer.

It is found in the cytoplasm. It catalyses the reaction AMP + diphosphate = 5-phospho-alpha-D-ribose 1-diphosphate + adenine. It functions in the pathway purine metabolism; AMP biosynthesis via salvage pathway; AMP from adenine: step 1/1. In terms of biological role, catalyzes a salvage reaction resulting in the formation of AMP, that is energically less costly than de novo synthesis. This is Adenine phosphoribosyltransferase from Aliivibrio salmonicida (strain LFI1238) (Vibrio salmonicida (strain LFI1238)).